Consider the following 124-residue polypeptide: Large ribosomal subunit protein bL12 (124 aa).

Belongs to the bacterial ribosomal protein bL12 family. In terms of assembly, homodimer. Part of the ribosomal stalk of the 50S ribosomal subunit. Forms a multimeric L10(L12)X complex, where L10 forms an elongated spine to which 2 to 4 L12 dimers bind in a sequential fashion. Binds GTP-bound translation factors.

Functionally, forms part of the ribosomal stalk which helps the ribosome interact with GTP-bound translation factors. Is thus essential for accurate translation. In Cupriavidus metallidurans (strain ATCC 43123 / DSM 2839 / NBRC 102507 / CH34) (Ralstonia metallidurans), this protein is Large ribosomal subunit protein bL12.